Consider the following 21-residue polypeptide: uncharacterized protein (21 aa).

This is an uncharacterized protein from Dictyostelium discoideum (Social amoeba).